A 105-amino-acid chain; its full sequence is Large ribosomal subunit protein uL22 (105 aa).

The protein belongs to the universal ribosomal protein uL22 family. In terms of assembly, part of the 50S ribosomal subunit.

In terms of biological role, this protein binds specifically to 23S rRNA; its binding is stimulated by other ribosomal proteins, e.g. L4, L17, and L20. It is important during the early stages of 50S assembly. It makes multiple contacts with different domains of the 23S rRNA in the assembled 50S subunit and ribosome. Its function is as follows. The globular domain of the protein is located near the polypeptide exit tunnel on the outside of the subunit, while an extended beta-hairpin is found that lines the wall of the exit tunnel in the center of the 70S ribosome. The chain is Large ribosomal subunit protein uL22 from Sulfurimonas denitrificans (strain ATCC 33889 / DSM 1251) (Thiomicrospira denitrificans (strain ATCC 33889 / DSM 1251)).